We begin with the raw amino-acid sequence, 140 residues long: MPTFNQLVRKGRKTMEKNSQAPALQKGFNSLRKKTTDASAPQKRGVCTAVRTATPKKPNSALRKIARVRLSNGIEVTSYIPGEGHNLQEHSVVLIRGGRVKDLPGTRYHIVRGTLDTAGVAKRRQARSKYGAKRPKEAKK.

A disordered region spans residues 1–44 (MPTFNQLVRKGRKTMEKNSQAPALQKGFNSLRKKTTDASAPQKR). D102 carries the 3-methylthioaspartic acid modification. The interval 120-140 (VAKRRQARSKYGAKRPKEAKK) is disordered. A compositionally biased stretch (basic residues) spans 121 to 140 (AKRRQARSKYGAKRPKEAKK).

It belongs to the universal ribosomal protein uS12 family. As to quaternary structure, part of the 30S ribosomal subunit. Contacts proteins S8 and S17. May interact with IF1 in the 30S initiation complex.

With S4 and S5 plays an important role in translational accuracy. Functionally, interacts with and stabilizes bases of the 16S rRNA that are involved in tRNA selection in the A site and with the mRNA backbone. Located at the interface of the 30S and 50S subunits, it traverses the body of the 30S subunit contacting proteins on the other side and probably holding the rRNA structure together. The combined cluster of proteins S8, S12 and S17 appears to hold together the shoulder and platform of the 30S subunit. The sequence is that of Small ribosomal subunit protein uS12 from Lachnoclostridium phytofermentans (strain ATCC 700394 / DSM 18823 / ISDg) (Clostridium phytofermentans).